Here is a 234-residue protein sequence, read N- to C-terminus: 2,3,4,5-tetrahydropyridine-2,6-dicarboxylate N-acetyltransferase (234 aa).

This sequence belongs to the transferase hexapeptide repeat family. DapH subfamily.

It catalyses the reaction (S)-2,3,4,5-tetrahydrodipicolinate + acetyl-CoA + H2O = L-2-acetamido-6-oxoheptanedioate + CoA. Its pathway is amino-acid biosynthesis; L-lysine biosynthesis via DAP pathway; LL-2,6-diaminopimelate from (S)-tetrahydrodipicolinate (acetylase route): step 1/3. Catalyzes the transfer of an acetyl group from acetyl-CoA to tetrahydrodipicolinate. The polypeptide is 2,3,4,5-tetrahydropyridine-2,6-dicarboxylate N-acetyltransferase (Lacticaseibacillus paracasei (strain ATCC 334 / BCRC 17002 / CCUG 31169 / CIP 107868 / KCTC 3260 / NRRL B-441) (Lactobacillus paracasei)).